The primary structure comprises 443 residues: Xaa-Pro dipeptidase (443 aa).

Aspartate 246, aspartate 257, histidine 339, glutamate 384, and glutamate 423 together coordinate Mn(2+).

This sequence belongs to the peptidase M24B family. Bacterial-type prolidase subfamily. Requires Mn(2+) as cofactor.

The catalysed reaction is Xaa-L-Pro dipeptide + H2O = an L-alpha-amino acid + L-proline. Its function is as follows. Splits dipeptides with a prolyl residue in the C-terminal position. In Escherichia coli O8 (strain IAI1), this protein is Xaa-Pro dipeptidase.